The following is a 361-amino-acid chain: Probable dual-specificity RNA methyltransferase RlmN (361 aa).

The Proton acceptor role is filled by glutamate 91. The 233-residue stretch at 97 to 329 (QHYGLSVCVT…KKKGGNCVVR (233 aa)) folds into the Radical SAM core domain. Cysteine 104 and cysteine 340 form a disulfide bridge. Positions 111, 115, and 118 each coordinate [4Fe-4S] cluster. S-adenosyl-L-methionine contacts are provided by residues 163 to 164 (GE), serine 195, 218 to 220 (SLH), and asparagine 296. The S-methylcysteine intermediate role is filled by cysteine 340.

This sequence belongs to the radical SAM superfamily. RlmN family. Requires [4Fe-4S] cluster as cofactor.

It localises to the cytoplasm. It carries out the reaction adenosine(2503) in 23S rRNA + 2 reduced [2Fe-2S]-[ferredoxin] + 2 S-adenosyl-L-methionine = 2-methyladenosine(2503) in 23S rRNA + 5'-deoxyadenosine + L-methionine + 2 oxidized [2Fe-2S]-[ferredoxin] + S-adenosyl-L-homocysteine. The enzyme catalyses adenosine(37) in tRNA + 2 reduced [2Fe-2S]-[ferredoxin] + 2 S-adenosyl-L-methionine = 2-methyladenosine(37) in tRNA + 5'-deoxyadenosine + L-methionine + 2 oxidized [2Fe-2S]-[ferredoxin] + S-adenosyl-L-homocysteine. Its function is as follows. Specifically methylates position 2 of adenine 2503 in 23S rRNA and position 2 of adenine 37 in tRNAs. The sequence is that of Probable dual-specificity RNA methyltransferase RlmN from Streptococcus pneumoniae (strain Hungary19A-6).